The sequence spans 438 residues: MSNTTDSALWTAFIHVIQRDVQPAVGCTEPIALALASAIAASYLPAKAERIEARVSPNLMKNGMGVTVPGTGMVGLPIAAAVGALGGDPDGGLEVLKNLSSQQVVEAKAMLDRGDVRVDMQAGDEILFAEATLYHGDQWACVTIAGGHTQVVRIVINGNVLFELAPESPSEQVVCHAHDCLKQATARQVYQFATQVPFEQIAFILQAAKLNGALSQEGLTGNYGLHIGASLMRQRGRGLLVKDLLSDIMIRSAAASDARMGGALLPAMSNSGSGNQGIAATMPVVVVAEHVGASEEELARALILSHLMAIYIHNQLPTLSALCAATTAAMGAAAGMAWLLEPRYEPVALAIGSMIGDISGIICDGAANSCAMKVSTSVSAAYKAVLMALDSSGVTGNEGIVADDVDQSIANLCALACGAMRQTDSQIIEIMAHKCHCD.

This sequence belongs to the UPF0597 family.

This is UPF0597 protein YE0448 from Yersinia enterocolitica serotype O:8 / biotype 1B (strain NCTC 13174 / 8081).